The sequence spans 122 residues: Large ribosomal subunit protein uL14c (122 aa).

This sequence belongs to the universal ribosomal protein uL14 family. As to quaternary structure, part of the 50S ribosomal subunit.

The protein localises to the plastid. The protein resides in the chloroplast. In terms of biological role, binds to 23S rRNA. This Illicium oligandrum (Star anise) protein is Large ribosomal subunit protein uL14c.